Reading from the N-terminus, the 213-residue chain is Large ribosomal subunit protein uL3 (213 aa).

Residue Gln151 is modified to N5-methylglutamine.

Belongs to the universal ribosomal protein uL3 family. In terms of assembly, part of the 50S ribosomal subunit. Forms a cluster with proteins L14 and L19. Post-translationally, methylated by PrmB.

Its function is as follows. One of the primary rRNA binding proteins, it binds directly near the 3'-end of the 23S rRNA, where it nucleates assembly of the 50S subunit. This Rhizobium etli (strain CIAT 652) protein is Large ribosomal subunit protein uL3.